The chain runs to 131 residues: Rhodopsin (131 aa).

Over 1 to 16 (CGIDYYTRAPGYNNES) the chain is Extracellular. A glycan (N-linked (GlcNAc...) asparagine) is linked at Asn14. Residues 17–38 (FVIYMFIVHFLIPLFIISFCYG) form a helical membrane-spanning segment. Residues 39 to 66 (NLLCAVKAAAAAQEESETTQRAEREVTR) are Cytoplasmic-facing. The chain crosses the membrane as a helical span at residues 67–88 (MVIMMVISYLVSWVPYASVAWY). At 89–100 (IFSNQGSEFGPV) the chain is on the extracellular side. Residues 101 to 122 (FMTIPAFFAKSSALYNPLIYVL) traverse the membrane as a helical segment. Position 110 is an N6-(retinylidene)lysine (Lys110). At 123–131 (MNKQFRHCM) the chain is on the cytoplasmic side.

It belongs to the G-protein coupled receptor 1 family. Opsin subfamily. In terms of processing, phosphorylated on some or all of the serine and threonine residues present in the C-terminal region. Post-translationally, contains one covalently linked retinal chromophore.

Its subcellular location is the membrane. It is found in the cell projection. It localises to the cilium. The protein localises to the photoreceptor outer segment. Functionally, photoreceptor required for image-forming vision at low light intensity. While most salt water fish species use retinal as chromophore, most freshwater fish use 3-dehydroretinal, or a mixture of retinal and 3-dehydroretinal. Light-induced isomerization of 11-cis to all-trans retinal triggers a conformational change that activates signaling via G-proteins. Subsequent receptor phosphorylation mediates displacement of the bound G-protein alpha subunit by arrestin and terminates signaling. The chain is Rhodopsin (rho) from Coregonus autumnalis (Arctic cisco).